The chain runs to 325 residues: Glutarate 2-hydroxylase (325 aa).

Fe cation-binding residues include His160, Asp162, and His292.

The protein belongs to the glutarate hydroxylase family. Homotetramer. The cofactor is Fe(2+).

It catalyses the reaction glutarate + 2-oxoglutarate + O2 = (S)-2-hydroxyglutarate + succinate + CO2. It functions in the pathway amino-acid degradation. Its function is as follows. Acts as an alpha-ketoglutarate-dependent dioxygenase catalyzing hydroxylation of glutarate (GA) to L-2-hydroxyglutarate (L2HG). Functions in a L-lysine degradation pathway that proceeds via cadaverine, glutarate and L-2-hydroxyglutarate. This Escherichia coli O127:H6 (strain E2348/69 / EPEC) protein is Glutarate 2-hydroxylase.